A 346-amino-acid chain; its full sequence is Glucose-6-phosphatase 3 (346 aa).

The Lumenal segment spans residues 1–24; sequence MESTLGAGIVIAEALQNQLAWLEN. Residues 25–45 traverse the membrane as a helical segment; sequence VWLWITFLGDPKILFLFYFPA. The Cytoplasmic portion of the chain corresponds to 46–54; the sequence is AYYASRRVG. The chain crosses the membrane as a helical span at residues 55–75; that stretch reads IAVLWISLITEWLNLIFKWFL. Residues 76–114 lie on the Lumenal side of the membrane; sequence FGDRPFWWVHESGYYSQAPAQVHQFPSSCETGPGSPSGH. Arginine 79 lines the substrate pocket. Catalysis depends on histidine 114, which acts as the Proton donor. The chain crosses the membrane as a helical span at residues 115-135; that stretch reads CMITGAALWPIMTALSSQVAT. Residues 136–146 are Cytoplasmic-facing; the sequence is RARSRWVRVMP. The chain crosses the membrane as a helical span at residues 147–164; that stretch reads SLAYCTFLLAVGLSRIFI. Arginine 161 is a binding site for substrate. Residues 165–169 are Lumenal-facing; that stretch reads LAHFP. Catalysis depends on histidine 167, which acts as the Nucleophile. The helical transmembrane segment at 170–186 threads the bilayer; it reads HQVLAGLITGAVLGWLM. Residues 187-197 lie on the Cytoplasmic side of the membrane; that stretch reads TPRVPMERELS. The helical transmembrane segment at 198 to 218 threads the bilayer; the sequence is FYGLTALALMLGTSLIYWTLF. The Lumenal segment spans residues 219-254; the sequence is TLGLDLSWSISLAFKWCERPEWIHVDSRPFASLSRD. A helical transmembrane segment spans residues 255-273; sequence SGAALGLGIALHSPCYAQV. At 274 to 283 the chain is on the cytoplasmic side; it reads RRAQLGNGQK. The helical transmembrane segment at 284–304 threads the bilayer; it reads IACLVLAMGLLGPLDWLGHPP. The Lumenal portion of the chain corresponds to 305 to 307; that stretch reads QIS. Residues 308–328 form a helical membrane-spanning segment; the sequence is LFYIFNFLKYTLWPCLVLALV. The Cytoplasmic segment spans residues 329–346; sequence PWAVHMFSAQEAPPIHSS.

This sequence belongs to the glucose-6-phosphatase family. Ubiquitously expressed. Highly expressed in skeletal muscle, at intermediate levels in heart, brain, placenta, kidney, colon, thymus, spleen and pancreas. Also detected in testis, prostate, ovary, liver, lung, small intestine and peripheral blood lymphocytes.

Its subcellular location is the endoplasmic reticulum membrane. The catalysed reaction is D-glucose 6-phosphate + H2O = D-glucose + phosphate. It functions in the pathway carbohydrate biosynthesis; gluconeogenesis. With respect to regulation, inhibited by vanadate. Functionally, hydrolyzes glucose-6-phosphate to glucose in the endoplasmic reticulum. May form with the glucose-6-phosphate transporter (SLC37A4/G6PT) a ubiquitously expressed complex responsible for glucose production through glycogenolysis and gluconeogenesis. Probably required for normal neutrophil function. The chain is Glucose-6-phosphatase 3 (G6PC3) from Homo sapiens (Human).